The chain runs to 133 residues: Agglutinin alpha chain (133 aa).

One can recognise a Jacalin-type lectin domain in the interval 1–133 (GVTFDDGAYT…LDYFSIYLSL (133 aa)).

The protein belongs to the jacalin lectin family. In terms of assembly, formed of four alpha chains and four beta chains.

Its function is as follows. D-galactose-specific lectin, binds the T-antigen structure Gal-beta1,3-GalNAc. The sequence is that of Agglutinin alpha chain from Maclura pomifera (Osage orange).